We begin with the raw amino-acid sequence, 65 residues long: Large ribosomal subunit protein bL35 (65 aa).

The span at Met-1–Arg-16 shows a compositional bias: basic residues. The interval Met-1 to Gly-21 is disordered.

Belongs to the bacterial ribosomal protein bL35 family.

The sequence is that of Large ribosomal subunit protein bL35 from Streptococcus pyogenes serotype M18 (strain MGAS8232).